The primary structure comprises 103 residues: Pro-glucagon (103 aa).

Belongs to the glucagon family.

It is found in the secreted. In terms of biological role, plays a key role in glucose metabolism and homeostasis. Regulates blood glucose by increasing gluconeogenesis and decreasing glycolysis. The protein is Pro-glucagon (gcg) of Aquarana catesbeiana (American bullfrog).